A 274-amino-acid chain; its full sequence is Diaminopimelate epimerase (274 aa).

2 residues coordinate substrate: Asn-11 and Asn-62. The active-site Proton donor is Cys-71. Substrate-binding positions include 72-73 (GN), Asn-157, Asn-190, and 208-209 (ER). The active-site Proton acceptor is Cys-217. Residue 218 to 219 (GT) coordinates substrate.

This sequence belongs to the diaminopimelate epimerase family. Homodimer.

Its subcellular location is the cytoplasm. It carries out the reaction (2S,6S)-2,6-diaminopimelate = meso-2,6-diaminopimelate. Its pathway is amino-acid biosynthesis; L-lysine biosynthesis via DAP pathway; DL-2,6-diaminopimelate from LL-2,6-diaminopimelate: step 1/1. Catalyzes the stereoinversion of LL-2,6-diaminopimelate (L,L-DAP) to meso-diaminopimelate (meso-DAP), a precursor of L-lysine and an essential component of the bacterial peptidoglycan. The sequence is that of Diaminopimelate epimerase from Elusimicrobium minutum (strain Pei191).